An 889-amino-acid chain; its full sequence is A disintegrin and metalloproteinase with thrombospondin motifs 8 (889 aa).

A signal peptide spans 1 to 26 (MLPAPAAPRWPPLLLLLLLLLPLARG). Residues 27–213 (APARPAAGGQ…PLGATSRTKR (187 aa)) constitute a propeptide that is removed on maturation. Residues 138–210 (QGAGGSLAQP…PPPPLGATSR (73 aa)) form a disordered region. Residues 173–183 (EGQRQERGDHQ) show a composition bias toward basic and acidic residues. A compositionally biased stretch (acidic residues) spans 184–197 (EDSEEESQEEEAEG). The Peptidase M12B domain occupies 219–429 (RFVETLLVAD…GHGDCLLDAP (211 aa)). Intrachain disulfides connect C294/C347, C323/C329, C341/C424, C379/C408, C452/C477, C463/C486, C472/C507, C501/C512, C538/C575, C542/C580, and C553/C565. A glycan (N-linked (GlcNAc...) asparagine) is linked at N344. Residue H363 participates in Zn(2+) binding. The active site involves E364. Zn(2+) contacts are provided by H367 and H373. N-linked (GlcNAc...) asparagine glycans are attached at residues N400, N465, and N490. The Disintegrin domain maps to 438-525 (GLPGRMALYQ…EEVERPKPVA (88 aa)). One can recognise a TSP type-1 1 domain in the interval 526 to 581 (DGGWAPWGPWGECSRTCGGGVQFSHRECKDPEPQNGGRYCLGRRAKYQSCHTEECP). N-linked (GlcNAc...) asparagine glycosylation is present at N599. The spacer stretch occupies residues 690–831 (RKVSGSLTPT…RATTNIIQPL (142 aa)). One can recognise a TSP type-1 2 domain in the interval 833 to 888 (HAQWVLGDWSECSSTCGAGWQRRTVECRDPSGQASATCNKALKPEDAKPCESQLCP).

Requires Zn(2+) as cofactor. The precursor is cleaved by a furin endopeptidase. Post-translationally, glycosylated. Can be O-fucosylated by POFUT2 on a serine or a threonine residue found within the consensus sequence C1-X(2)-(S/T)-C2-G of the TSP type-1 repeat domains where C1 and C2 are the first and second cysteine residue of the repeat, respectively. Fucosylated repeats can then be further glycosylated by the addition of a beta-1,3-glucose residue by the glucosyltransferase, B3GALTL. Fucosylation mediates the efficient secretion of ADAMTS family members. Can also be C-glycosylated with one or two mannose molecules on tryptophan residues within the consensus sequence W-X-X-W of the TPRs, and N-glycosylated. These other glycosylations can also facilitate secretion. In terms of tissue distribution, highly expressed in adult and fetal lung, lower expression in brain, placenta, heart, stomach and fetal brain and kidney.

Its subcellular location is the secreted. The protein localises to the extracellular space. It localises to the extracellular matrix. Has anti-angiogenic properties. The protein is A disintegrin and metalloproteinase with thrombospondin motifs 8 (ADAMTS8) of Homo sapiens (Human).